The following is a 139-amino-acid chain: Large ribosomal subunit protein bL17 (139 aa).

Positions 120 to 139 (ESAKGQDSGPVHVEGDEEAA) are disordered.

It belongs to the bacterial ribosomal protein bL17 family. As to quaternary structure, part of the 50S ribosomal subunit. Contacts protein L32.

The polypeptide is Large ribosomal subunit protein bL17 (Parvibaculum lavamentivorans (strain DS-1 / DSM 13023 / NCIMB 13966)).